A 545-amino-acid polypeptide reads, in one-letter code: Chaperonin GroEL 2 (545 aa).

ATP is bound by residues 29–32 (TLGP), 86–90 (DGTTT), Gly413, 479–481 (NAA), and Asp495.

The protein belongs to the chaperonin (HSP60) family. As to quaternary structure, forms a cylinder of 14 subunits composed of two heptameric rings stacked back-to-back. Interacts with the co-chaperonin GroES.

It is found in the cytoplasm. The catalysed reaction is ATP + H2O + a folded polypeptide = ADP + phosphate + an unfolded polypeptide.. Functionally, together with its co-chaperonin GroES, plays an essential role in assisting protein folding. The GroEL-GroES system forms a nano-cage that allows encapsulation of the non-native substrate proteins and provides a physical environment optimized to promote and accelerate protein folding. The polypeptide is Chaperonin GroEL 2 (Prochlorococcus marinus (strain MIT 9215)).